A 105-amino-acid chain; its full sequence is Class I hydrophobin 1 (105 aa).

Residues 1 to 17 (MQFTSFAILAISAVASA) form the signal peptide. 4 cysteine pairs are disulfide-bonded: C36-C85, C44-C78, C45-C63, and C86-C100. N48, N67, and N97 each carry an N-linked (GlcNAc...) asparagine glycan.

This sequence belongs to the fungal hydrophobin family. Self-assembles to form functional amyloid fibrils called rodlets. Self-assembly into fibrillar rodlets occurs spontaneously at hydrophobic:hydrophilic interfaces and the rodlets further associate laterally to form amphipathic monolayers. Abundant on conidia and aerial structures formed in vitro and emerging from disease lesions on infected tomato plants.

The protein resides in the secreted. The protein localises to the cell wall. Aerial growth, conidiation, and dispersal of filamentous fungi in the environment rely upon a capability of their secreting small amphipathic proteins called hydrophobins (HPBs) with low sequence identity. Class I can self-assemble into an outermost layer of rodlet bundles on aerial cell surfaces, conferring cellular hydrophobicity that supports fungal growth, development and dispersal; whereas Class II form highly ordered films at water-air interfaces through intermolecular interactions but contribute nothing to the rodlet structure. Hcf-1 is a class I hydrophobin that is not necessary for the development of hyphae or conidia but acts as the main determinant of conidium hydrophobicity and, thus, is required for efficient water-mediated dispersal of conidia. Forms a component of the rodlet layer, but other hydrophobins must also participate in this proces. In Passalora fulva (Tomato leaf mold), this protein is Class I hydrophobin 1.